We begin with the raw amino-acid sequence, 573 residues long: Urease subunit alpha 2 (573 aa).

The Urease domain occupies 136–573; sequence GAIDAHVHLI…LPMAQRYFLF (438 aa). Ni(2+) contacts are provided by His-141, His-143, and Lys-224. Position 224 is an N6-carboxylysine (Lys-224). His-226 contributes to the substrate binding site. Positions 253 and 279 each coordinate Ni(2+). Catalysis depends on His-327, which acts as the Proton donor. Asp-367 contacts Ni(2+).

It belongs to the metallo-dependent hydrolases superfamily. Urease alpha subunit family. May form a heterohexamer of 3 UreC (alpha) and 3 UreAB (gamma/beta) subunits. May also form a heterotrimer of UreA (gamma), UreB (beta) and UreC (alpha) subunits. Three heterotrimers associate to form the active enzyme. Ni cation is required as a cofactor. In terms of processing, carboxylation allows a single lysine to coordinate two nickel ions.

It localises to the cytoplasm. It catalyses the reaction urea + 2 H2O + H(+) = hydrogencarbonate + 2 NH4(+). It functions in the pathway nitrogen metabolism; urea degradation; CO(2) and NH(3) from urea (urease route): step 1/1. This chain is Urease subunit alpha 2, found in Streptomyces avermitilis (strain ATCC 31267 / DSM 46492 / JCM 5070 / NBRC 14893 / NCIMB 12804 / NRRL 8165 / MA-4680).